The chain runs to 407 residues: Phosphopentomutase (407 aa).

6 residues coordinate Mn(2+): aspartate 10, aspartate 306, histidine 311, aspartate 347, histidine 348, and histidine 359.

Belongs to the phosphopentomutase family. It depends on Mn(2+) as a cofactor.

The protein localises to the cytoplasm. The enzyme catalyses 2-deoxy-alpha-D-ribose 1-phosphate = 2-deoxy-D-ribose 5-phosphate. The catalysed reaction is alpha-D-ribose 1-phosphate = D-ribose 5-phosphate. The protein operates within carbohydrate degradation; 2-deoxy-D-ribose 1-phosphate degradation; D-glyceraldehyde 3-phosphate and acetaldehyde from 2-deoxy-alpha-D-ribose 1-phosphate: step 1/2. In terms of biological role, isomerase that catalyzes the conversion of deoxy-ribose 1-phosphate (dRib-1-P) and ribose 1-phosphate (Rib-1-P) to deoxy-ribose 5-phosphate (dRib-5-P) and ribose 5-phosphate (Rib-5-P), respectively. The polypeptide is Phosphopentomutase (Salmonella dublin (strain CT_02021853)).